Reading from the N-terminus, the 880-residue chain is Kinesin heavy chain (880 aa).

In terms of domain architecture, Kinesin motor spans 4–327; it reads SIKVVCRFRP…LRFGMRAKAI (324 aa). Residues 85–92 and 235–242 contribute to the ATP site; these read GQTGAGKS and GSEKVGKT. The disordered stretch occupies residues 388 to 426; it reads VSGAKAAAAQTPRPSTPSRLATESRAETPVAERSATPGI. Residues 399 to 408 are compositionally biased toward polar residues; sequence PRPSTPSRLA. Residues 428–849 are a coiled coil; that stretch reads IDKDEREEFL…QEKLTTASHR (422 aa).

The protein belongs to the TRAFAC class myosin-kinesin ATPase superfamily. Kinesin family. Kinesin subfamily.

It is found in the cytoplasm. It localises to the cytoskeleton. In terms of biological role, kinesin is a microtubule-associated force-producing protein that may play a role in organelle transport. Its motor activity is directed toward the microtubule's plus end. This is Kinesin heavy chain (klp1) from Botryotinia fuckeliana (Noble rot fungus).